A 56-amino-acid chain; its full sequence is Mitoregulin (56 aa).

Residues 2–9 (ADVSERTL) are Mitochondrial matrix-facing. A helical transmembrane segment spans residues 10–27 (QLSVLVAFASGVLLGWQA). The Mitochondrial intermembrane portion of the chain corresponds to 28–56 (NRLRRRYLDWRKRRLQDKLAATQKKLDLA).

In terms of assembly, interacts with mitochondrial trifunctional enzyme, a heterotetrameric complex composed of 2 HADHA subunits and 2 HADHB subunits. Interacts with cytochrome b5 reductase CYB5R3; the interaction is required to maintain cellular lipid composition and leads to stimulation of mitochondrial respiratory complex I activity. Interacts with ATP synthase subunit ATP5F1B/ATP5B.

The protein localises to the mitochondrion inner membrane. Its function is as follows. Positively regulates mitochondrial complex assembly and/or stability. Increases mitochondrial membrane potential while decreasing mitochondrial reactive oxygen species. Increases mitochondrial respiration rate. Increased mitochondrial respiratory activity promotes myogenic differentiation which facilitates muscle growth and regeneration. Increases mitochondrial calcium retention capacity. Plays a role in maintenance of cellular lipid composition through its interaction with cytochrome b5 reductase CYB5R3 which is required for mitochondrial respiratory complex I activity. Interacts with the mitochondrial trifunctional enzyme complex (MTE) and enhances fatty acid beta-oxidation. Not required for MTE formation or stability. Modulates triglyceride clearance in adipocytes through its role in regulating fatty acid beta-oxidation and lipolysis. This Homo sapiens (Human) protein is Mitoregulin.